Consider the following 596-residue polypeptide: Aspartate--tRNA(Asp/Asn) ligase (596 aa).

Glu-182 contributes to the L-aspartate binding site. The interval 206–209 (QLFK) is aspartate. Position 228 (Arg-228) interacts with L-aspartate. ATP-binding positions include 228–230 (RDE) and Gln-237. Position 456 (His-456) interacts with L-aspartate. Glu-490 is a binding site for ATP. Arg-497 provides a ligand contact to L-aspartate. Residue 542-545 (GLDR) participates in ATP binding.

It belongs to the class-II aminoacyl-tRNA synthetase family. Type 1 subfamily. As to quaternary structure, homodimer.

The protein resides in the cytoplasm. The enzyme catalyses tRNA(Asx) + L-aspartate + ATP = L-aspartyl-tRNA(Asx) + AMP + diphosphate. Its function is as follows. Aspartyl-tRNA synthetase with relaxed tRNA specificity since it is able to aspartylate not only its cognate tRNA(Asp) but also tRNA(Asn). Reaction proceeds in two steps: L-aspartate is first activated by ATP to form Asp-AMP and then transferred to the acceptor end of tRNA(Asp/Asn). The chain is Aspartate--tRNA(Asp/Asn) ligase from Syntrophotalea carbinolica (strain DSM 2380 / NBRC 103641 / GraBd1) (Pelobacter carbinolicus).